Consider the following 127-residue polypeptide: Protein ApaG (127 aa).

An ApaG domain is found at 3-127 (KSETYRIEVE…FMLAMPRVLH (125 aa)).

This is Protein ApaG from Azoarcus sp. (strain BH72).